A 69-amino-acid polypeptide reads, in one-letter code: Small ribosomal subunit protein uS14 (69 aa).

Cysteine 33, cysteine 36, cysteine 51, and cysteine 54 together coordinate Zn(2+).

It belongs to the universal ribosomal protein uS14 family. Zinc-binding uS14 subfamily. As to quaternary structure, part of the 30S ribosomal subunit. Zn(2+) is required as a cofactor.

Binds 16S rRNA, required for the assembly of 30S particles. The polypeptide is Small ribosomal subunit protein uS14 (Nanoarchaeum equitans (strain Kin4-M)).